The following is a 460-amino-acid chain: Serine incorporator 5 (460 aa).

The Extracellular segment spans residues 1-36 (MSARCCAGQLACCCGSAGCALCCGCCPKFRQSRSTR). The helical transmembrane segment at 37 to 57 (FMYLFYFTLVIIPCCVMMSPS) threads the bilayer. Residues 58–89 (VMKQMTEHIPFFEDFCKGIKAGDTCENLVGYS) lie on the Cytoplasmic side of the membrane. The chain crosses the membrane as a helical span at residues 90 to 110 (AVYRVCFGMACFFFVFCVLTF). Residues 111–124 (KVNNSKSCRASIHN) lie on the Extracellular side of the membrane. Asn113 carries N-linked (GlcNAc...) asparagine glycosylation. The helical transmembrane segment at 125–145 (GFWFFKLLLLGAMCSGAFFIP) threads the bilayer. Residues 146–156 (DQETFLNVWRY) lie on the Cytoplasmic side of the membrane. A helical transmembrane segment spans residues 157–177 (VGAVGSFFFICIQLLLIVEFA). Over 178-197 (HKWNKNWTAGTVRNKLWYAS) the chain is Extracellular. N-linked (GlcNAc...) asparagine glycosylation is present at Asn183. A helical membrane pass occupies residues 198–218 (LSLALIMYSIAVGGLALMAVF). Over 219 to 229 (YTQWDDCMDNK) the chain is Cytoplasmic. The helical transmembrane segment at 230 to 250 (ILLGVHGGLCVLISLAAISPC) threads the bilayer. At 251 to 258 (VQNRQPHS) the chain is on the extracellular side. The chain crosses the membrane as a helical span at residues 259-279 (GLLQPGLISCYVTYLTFSALT). Residues 280 to 309 (SKPEKVVKDEHGKNVTICVPDFGQDFRRDE) lie on the Cytoplasmic side of the membrane. A helical membrane pass occupies residues 310-330 (SMVTWLGTLLLVVCISYSCLT). The Extracellular portion of the chain corresponds to 331-390 (STTRSSSDALQRRYGAPELEVARCCFCFGPDGEDTEEQQNVKEGPRVIYDEKKGTVYSYS). The helical transmembrane segment at 391 to 411 (YFHFVLLLASLYVMMTLTSWF) threads the bilayer. The Cytoplasmic portion of the chain corresponds to 412-427 (HYENATIETFFVGSWS). A helical membrane pass occupies residues 428-448 (IFWVKMASCWMCVLLYLWTLV). Topologically, residues 449-460 (APLCCPSRQFSV) are extracellular.

Belongs to the TDE1 family. In terms of tissue distribution, brain. Expressed at high levels in the white matter and the oligodendroglial cells of the brain. Expressed at low levels in the liver.

Its subcellular location is the cell membrane. It carries out the reaction a 1,2-diacyl-sn-glycero-3-phospho-L-serine(in) = a 1,2-diacyl-sn-glycero-3-phospho-L-serine(out). The enzyme catalyses a 1,2-diacyl-sn-glycero-3-phosphocholine(in) = a 1,2-diacyl-sn-glycero-3-phosphocholine(out). The catalysed reaction is a 1,2-diacyl-sn-glycero-3-phosphoethanolamine(in) = a 1,2-diacyl-sn-glycero-3-phosphoethanolamine(out). Functionally, restriction factor required to restrict infectivity of gammaretroviruses: acts by inhibiting an early step of viral infection. Impairs the penetration of the viral particle into the cytoplasm. Non-ATP-dependent, non-specific lipid transporter for phosphatidylserine, phosphatidylcholine, and phosphatidylethanolamine. Functions as a scramblase that flips lipids in both directions across the membrane. Phospholipid scrambling results in gammaretroviral surface exposure of phosphatidylserine and loss of membrane asymmetry, which leads to loss of infectivity. Enhances the incorporation of serine into phosphatidylserine and sphingolipids. May play a role in providing serine molecules for the formation of myelin glycosphingolipids in oligodendrocytes. This is Serine incorporator 5 (Serinc5) from Rattus norvegicus (Rat).